The chain runs to 502 residues: Lipoprotein LipO (502 aa).

The first 21 residues, 1–21 (MKIRMRKKWMALPLAAMMIAG), serve as a signal peptide directing secretion. Cys-22 is lipidated: N-palmitoyl cysteine. A lipid anchor (S-diacylglycerol cysteine) is attached at Cys-22.

The protein localises to the cell membrane. The polypeptide is Lipoprotein LipO (lipO) (Bacillus subtilis (strain 168)).